Reading from the N-terminus, the 433-residue chain is Steroid hormone receptor ERR2 (433 aa).

The disordered stretch occupies residues 1–38 (MSSDDRHLGSSCGSFIKTEPSSPSSGIDALSHHSPSGS). Positions 28-38 (DALSHHSPSGS) are enriched in low complexity. The interaction with NANOG stretch occupies residues 93–211 (YMLNAIPKRL…SPPAKKPLTK (119 aa)). Residues 100–186 (KRLCLVCGDI…RVRGGRQKYK (87 aa)) constitute a DNA-binding region (nuclear receptor). NR C4-type zinc fingers lie at residues 103–123 (CLVC…CEAC) and 139–163 (CPAT…FMKC). Positions 203-433 (PPAKKPLTKI…LFLEMLEAKV (231 aa)) are essential for ESRRB transcriptional activity and interaction with NCOA3. An NR LBD domain is found at 208 to 432 (PLTKIVSYLL…KLFLEMLEAK (225 aa)).

Belongs to the nuclear hormone receptor family. NR3 subfamily. In terms of assembly, binds DNA as a monomer. Interacts with NR0B1; represses ESRRB activity at the GATA6 promoter. Interacts with NANOG; reciprocally modulates their transcriptional activities and activates POU5F1 expression. Interacts with NCOA3; mediates the interaction between ESRRB and RNA polymerase II complexes and allows NCOA3 corecruitment to ESRRB, KLF4, NANOG, and SOX2 enhancer regions to trigger ESRRB-dependent gene activation involved in self-renewal and pluripotency. Interacts with KDM1A; co-occupes the core set of ESRRB targets including ELF5 and EOMES. Interacts with the multiprotein complex Integrator, at least composed of INTS1, INTS2, INTS3, INTS4, INTS5, INTS6, INTS7, INTS8, INTS9/RC74, INTS10, INTS11/CPSF3L and INTS12; ESRRB is probably not a core component of the integrator complex and associates to integrator via its interaction with INTS1 and INTS9; attracts the transcriptional machinery. Interacts with JARID2. Interacts with POU5F1; recruits ESRRB near the POU5F1-SOX2 element in the NANOG proximal promoter leading to activation of NANOG expression; the interaction is DNA independent. Interacts with NFE2L2; represses NFE2L2 transcriptional activity. Isoform 1 interacts with ESR1. Post-translationally, acetylated by PCAF/KAT2 (in vitro).

The protein localises to the nucleus. Its subcellular location is the cytoplasm. It is found in the chromosome. Its function is as follows. Transcription factor that binds a canonical ESRRB recognition (ERRE) sequence 5'TCAAGGTCA-3' localized on promoter and enhancer of targets genes regulating their expression or their transcription activity. Plays a role, in a LIF-independent manner, in maintainance of self-renewal and pluripotency of embryonic and trophoblast stem cells through different signaling pathways including FGF signaling pathway and Wnt signaling pathways. Involved in morula development (2-16 cells embryos) by acting as a regulator at the 8-cell stage. Upon FGF signaling pathway activation, interacts with KDM1A by directly binding to enhancer site of ELF5 and EOMES and activating their transcription leading to self-renewal of trophoblast stem cells. Also regulates expression of multiple rod-specific genes and is required for survival of this cell type. Plays a role as transcription factor activator of GATA6, NR0B1, POU5F1 and PERM1. Plays a role as transcription factor repressor of NFE2L2 transcriptional activity and ESR1 transcriptional activity. During mitosis remains bound to a subset of interphase target genes, including pluripotency regulators, through the canonical ESRRB recognition (ERRE) sequence, leading to their transcriptional activation in early G1 phase. Can coassemble on structured DNA elements with other transcription factors like SOX2, POU5F1, KDM1A and NCOA3 to trigger ESRRB-dependent gene activation. This mechanism, in the case of SOX2 corecruitment prevents the embryonic stem cells (ESCs) to epiblast stem cells (EpiSC) transition through positive regulation of NR0B1 that inhibits the EpiSC transcriptional program. Also plays a role inner ear development by controlling expression of ion channels and transporters and in early placentation. Functionally, transcription factor that binds a canonical ESRRB recognition (ERRE) sequence 5'TCAAGGTCA-3' localized on promoter and enhancer of targets genes regulating their expression or their transcription activity. Positively regulates ESR1 transcriptional activity upon E2 stimulation. This Homo sapiens (Human) protein is Steroid hormone receptor ERR2.